Consider the following 179-residue polypeptide: Replication restart protein DnaT (179 aa).

The required for trimerization and to bind PriB stretch occupies residues 1-83 (MSSRILTSHF…FEEPAAAPVA (83 aa)). Residues 84–179 (VPMGKFAMYA…DSHIPRGFRG (96 aa)) form a binds ssDNA region. Residues 151–179 (SRASNGGQPKRDVNSVSEPDSHIPRGFRG) form a disordered region. The span at 159–173 (PKRDVNSVSEPDSHI) shows a compositional bias: basic and acidic residues.

This sequence belongs to the DnaT family. In terms of assembly, homotrimer. Interacts with PriB. Interacts with PriC. Component of the replication restart primosome. Primosome assembly occurs via a 'hand-off' mechanism. PriA binds to replication forks, subsequently PriB then DnaT bind; DnaT then displaces ssDNA to generate the helicase loading substrate.

In terms of biological role, involved in the restart of stalled replication forks, which reloads the replicative helicase on sites other than the origin of replication. Can function in multiple replication restart pathways. Displaces ssDNA from a PriB-ssDNA complex. Probably forms a spiral filament on ssDNA. Its function is as follows. Binds single-stranded (ss)DNA. The minimal binding site is about 26 +/- 2 nucleotides (nt) per trimer. Two DNA-protein complexes are seen with 55 nt-long ssDNA. This is Replication restart protein DnaT from Klebsiella pneumoniae subsp. pneumoniae (strain ATCC 700721 / MGH 78578).